The following is a 445-amino-acid chain: Endoplasmic reticulum membrane adapter protein XK (445 aa).

Topologically, residues 1–2 are cytoplasmic; it reads MK. A helical transmembrane segment spans residues 3–23; sequence FPASVLASVFLFVAETMAALY. The Extracellular portion of the chain corresponds to 24 to 37; the sequence is LSSTYRSAGDRMWQ. The chain crosses the membrane as a helical span at residues 38–58; sequence ALTLFFSLMPCTLVQLTLLFV. Residues 59–68 are Cytoplasmic-facing; that stretch reads HRDLSRDRPL. Residues 69-89 form a helical membrane-spanning segment; it reads VLLMHLLQLGPLYRCCEVFCI. Topologically, residues 90–140 are extracellular; the sequence is YCQSDQNEEPYVSITKKRQMPKDGLSEEVEKEVGQSEGKLFTHRSAFSRAS. Ser-115 carries the phosphoserine modification. The chain crosses the membrane as a helical span at residues 141–161; the sequence is VIQAFLGSAPQLTLQLYITVL. Residues 162–170 lie on the Cytoplasmic side of the membrane; sequence EQNITTGRF. Residues 171 to 191 traverse the membrane as a helical segment; sequence IMVLSLLSIVYGALRCNILAI. The Extracellular portion of the chain corresponds to 192–207; the sequence is KIKYDEYEVKVKPLAY. A helical transmembrane segment spans residues 208-228; the sequence is VCIFLWRSFEIATRVIVLVLF. Residues 229–234 lie on the Cytoplasmic side of the membrane; sequence TSVLKI. A helical membrane pass occupies residues 235 to 255; it reads WVVVVILVNFFSFFLYPWILF. Residues 256–276 lie on the Extracellular side of the membrane; it reads WNSGSPFPENIEKALTRVGTT. The helical transmembrane segment at 277-297 threads the bilayer; that stretch reads IVLGFLTLLYAGINMFCWSAV. Topologically, residues 298–316 are cytoplasmic; that stretch reads QLKIDNPELISKSQNWYRL. A helical transmembrane segment spans residues 317-337; sequence LIYYMMRFVENSVLLLLWFFF. Residues 338 to 348 lie on the Extracellular side of the membrane; it reads KTDIYMYVCAP. A helical transmembrane segment spans residues 349-369; sequence LLILQLLIGYCTSILFMLVFY. At 370–445 the chain is on the cytoplasmic side; sequence QFFHPCKKLF…IWTAVDLCST (76 aa).

This sequence belongs to the XK family. Heterodimer with Kell; disulfide-linked. Interacts with VPS13A.

The protein resides in the endoplasmic reticulum membrane. Recruits the lipid transfer protein VPS13A from lipid droplets to the endoplasmic reticulum (ER) membrane. This Rattus norvegicus (Rat) protein is Endoplasmic reticulum membrane adapter protein XK.